The primary structure comprises 32 residues: Cytochrome b6-f complex subunit 7 (32 aa).

Residues Ala-9–Val-29 form a helical membrane-spanning segment.

This sequence belongs to the PetM family. The 4 large subunits of the cytochrome b6-f complex are cytochrome b6, subunit IV (17 kDa polypeptide, PetD), cytochrome f and the Rieske protein, while the 4 small subunits are PetG, PetL, PetM and PetN. The complex functions as a dimer.

Its subcellular location is the plastid. It is found in the chloroplast thylakoid membrane. Functionally, component of the cytochrome b6-f complex, which mediates electron transfer between photosystem II (PSII) and photosystem I (PSI), cyclic electron flow around PSI, and state transitions. The protein is Cytochrome b6-f complex subunit 7 of Porphyra purpurea (Red seaweed).